The following is an 83-amino-acid chain: High-potential iron-sulfur protein (83 aa).

4 residues coordinate [4Fe-4S] cluster: cysteine 43, cysteine 46, cysteine 61, and cysteine 75.

This sequence belongs to the high-potential iron-sulfur protein (HiPIP) family. In terms of assembly, homodimer.

The protein localises to the periplasm. Functionally, specific class of high-redox-potential 4Fe-4S ferredoxins. Functions in anaerobic electron transport in most purple and in some other photosynthetic bacteria and in at least one genus (Paracoccus) of halophilic, denitrifying bacteria. This is High-potential iron-sulfur protein from Thiocystis violacea.